Here is a 262-residue protein sequence, read N- to C-terminus: MNRIDKKFEVLKGEGRKALITFITAGDPDIETTYDIVLALEEAGSDIIELGIPYSDPLADGPTIQASSQRALNKGVKIPDIMKIVEKIRLKSDIPLVYLVYYNSIFKYGIQKFLKESKDVGIDGLIIPDLPIEERKDILEEADKYGIYLIPLVAPTSKERIKLITENGKGFVYCVSITGVTGAREDIETDIEEYMKTVSQYTNMPKAIGFGISTPEMAKKLKDFSDGIIVGSALVERIAKGYNKSEMLQEVKSFVSSLKEVL.

Active-site proton acceptor residues include E49 and D60.

The protein belongs to the TrpA family. In terms of assembly, tetramer of two alpha and two beta chains.

The catalysed reaction is (1S,2R)-1-C-(indol-3-yl)glycerol 3-phosphate + L-serine = D-glyceraldehyde 3-phosphate + L-tryptophan + H2O. The protein operates within amino-acid biosynthesis; L-tryptophan biosynthesis; L-tryptophan from chorismate: step 5/5. Its function is as follows. The alpha subunit is responsible for the aldol cleavage of indoleglycerol phosphate to indole and glyceraldehyde 3-phosphate. The sequence is that of Tryptophan synthase alpha chain from Thermoanaerobacter sp. (strain X514).